The primary structure comprises 193 residues: MKELEERIVQQGTVKPGNVLKVDAFLNHQCDVELFDHMGAAWAEHFKGKTIDKILTIEASGIGIACVVARHFGNVPVVFAKKAQSINLDGDQYTTTVYSFTKQKEFPVIVSKRYLNEGDHVLLIDDFLANGKALKGLIELCHEAGATVEGIGIAVEKGFQGGGDQLREEGYDVDSLAIVESMDPENGTIEFRS.

L20 and N27 together coordinate xanthine. 129-133 lines the 5-phospho-alpha-D-ribose 1-diphosphate pocket; it reads ANGKA. Residue K157 coordinates xanthine.

Belongs to the purine/pyrimidine phosphoribosyltransferase family. Xpt subfamily. Homodimer.

It is found in the cytoplasm. The catalysed reaction is XMP + diphosphate = xanthine + 5-phospho-alpha-D-ribose 1-diphosphate. It functions in the pathway purine metabolism; XMP biosynthesis via salvage pathway; XMP from xanthine: step 1/1. Converts the preformed base xanthine, a product of nucleic acid breakdown, to xanthosine 5'-monophosphate (XMP), so it can be reused for RNA or DNA synthesis. This chain is Xanthine phosphoribosyltransferase, found in Bifidobacterium adolescentis (strain ATCC 15703 / DSM 20083 / NCTC 11814 / E194a).